A 287-amino-acid polypeptide reads, in one-letter code: MRIVIITGLSGSGKSTAVRALEDEGFFCLDNLPVSLVTTFIELVEHSREDIKDVALVMDIRSRDFIKGYDQVFQAIASAGHSVKIFYFDATDEVLIRRFSETRRRHPALEGATVPEGIRFERDQLAGLRRIATAIIDTSEMNVHRLKELVIGLVKGGEGVLEMQVNLQSFGFRYGLPLESDLVMDVRFLPNPYFVATLRPFSGLDQGVREYVMGHKETVVFLEHFRDMLELLLPSYRREGKSYLSVSIGCTGGRHRSVAIAEELYNYFRQRNVNIKITHRDIDKGLG.

Position 8 to 15 (8 to 15 (GLSGSGKS)) interacts with ATP. 59 to 62 (DIRS) contributes to the GTP binding site.

Belongs to the RapZ-like family.

Displays ATPase and GTPase activities. The chain is Nucleotide-binding protein Gbem_0872 from Citrifermentans bemidjiense (strain ATCC BAA-1014 / DSM 16622 / JCM 12645 / Bem) (Geobacter bemidjiensis).